The primary structure comprises 144 residues: Flagellar assembly factor FliW (144 aa).

Belongs to the FliW family. Monomer. One copy interacts with the each alpha-helical wing of the CsrA homodimer, yielding a FliW-CsrA(2)-FliW complex. Comparison with a CsrA-mRNA structure (2JPP) suggests CsrA cannot bind both mRNA and FliW at the same time. Interacts with flagellin.

Its subcellular location is the cytoplasm. In terms of biological role, acts as an anti-CsrA protein, binds CsrA and prevents it from repressing translation of its target genes, one of which is flagellin. Binds to flagellin and participates in the assembly of the flagellum. Its function is as follows. Allosterically inhibits CsrA binding to mRNA in a non-competitive fashion by preventing CsrA binding to the 5'-UTR. The sequence is that of Flagellar assembly factor FliW from Geobacillus thermodenitrificans (strain NG80-2).